Consider the following 982-residue polypeptide: Ubiquitin carboxyl-terminal hydrolase 15 (982 aa).

The 112-residue stretch at 7–118 (VDLETQRSEV…SQQPIARKVV (112 aa)) folds into the DUSP domain. The USP domain occupies 288-933 (CGLSNLGNTC…AAYVLFYQRQ (646 aa)). Catalysis depends on Cys-297, which acts as the Nucleophile. The interval 623 to 695 (TEENDGSLHC…DNDSENGLCT (73 aa)) is disordered. The span at 655–672 (METDEPDDESSQDQELPS) shows a compositional bias: acidic residues. The Proton acceptor role is filled by His-891. The tract at residues 950 to 982 (QGASAATGAPHESDEESNEDENDIENENCMHTN) is disordered. The span at 962-975 (SDEESNEDENDIEN) shows a compositional bias: acidic residues.

It belongs to the peptidase C19 family.

The protein resides in the cytoplasm. It is found in the nucleus. The enzyme catalyses Thiol-dependent hydrolysis of ester, thioester, amide, peptide and isopeptide bonds formed by the C-terminal Gly of ubiquitin (a 76-residue protein attached to proteins as an intracellular targeting signal).. Its function is as follows. Hydrolase that removes conjugated ubiquitin from target proteins and regulates various pathways such as the TGF-beta receptor signaling and NF-kappa-B pathways. Acts as a key regulator of TGF-beta receptor signaling pathway, but the precise mechanism is still unclear: according to a report, acts by promoting deubiquitination of monoubiquitinated R-SMADs, thereby alleviating inhibition of R-SMADs and promoting activation of TGF-beta target genes. According to another reports, regulates the TGF-beta receptor signaling pathway by mediating deubiquitination and stabilization of tgfbr1, leading to an enhanced TGF-beta signal. May also regulate gene expression and/or DNA repair through the deubiquitination of histone H2B. Involved in endosome organization by mediating deubiquitination of rnf26 target(s), releasing vesicles that are restrained in the perinuclear region. The protein is Ubiquitin carboxyl-terminal hydrolase 15 (usp15) of Xenopus tropicalis (Western clawed frog).